The following is a 576-amino-acid chain: A-type ATP synthase subunit A (576 aa).

228-235 serves as a coordination point for ATP; it reads GGFGTGKT.

Belongs to the ATPase alpha/beta chains family. Has multiple subunits with at least A(3), B(3), C, D, E, F, H, I and proteolipid K(x).

It is found in the cell membrane. The enzyme catalyses ATP + H2O + 4 H(+)(in) = ADP + phosphate + 5 H(+)(out). Functionally, component of the A-type ATP synthase that produces ATP from ADP in the presence of a proton gradient across the membrane. The A chain is the catalytic subunit. This chain is A-type ATP synthase subunit A, found in Methanothrix thermoacetophila (strain DSM 6194 / JCM 14653 / NBRC 101360 / PT) (Methanosaeta thermophila).